Reading from the N-terminus, the 334-residue chain is GTP 3',8-cyclase (334 aa).

A Radical SAM core domain is found at 11 to 236 (GFNRKIDYLR…ESTESSQGPA (226 aa)). Arginine 20 is a binding site for GTP. [4Fe-4S] cluster-binding residues include cysteine 27 and cysteine 31. Tyrosine 33 is an S-adenosyl-L-methionine binding site. Cysteine 34 serves as a coordination point for [4Fe-4S] cluster. A GTP-binding site is contributed by arginine 69. Glycine 73 contributes to the S-adenosyl-L-methionine binding site. A GTP-binding site is contributed by threonine 100. Serine 124 serves as a coordination point for S-adenosyl-L-methionine. Lysine 161 is a GTP binding site. Methionine 195 contributes to the S-adenosyl-L-methionine binding site. [4Fe-4S] cluster is bound by residues cysteine 260 and cysteine 263. Residue 265–267 (RVR) participates in GTP binding. Residue cysteine 277 coordinates [4Fe-4S] cluster.

The protein belongs to the radical SAM superfamily. MoaA family. As to quaternary structure, monomer and homodimer. The cofactor is [4Fe-4S] cluster.

The catalysed reaction is GTP + AH2 + S-adenosyl-L-methionine = (8S)-3',8-cyclo-7,8-dihydroguanosine 5'-triphosphate + 5'-deoxyadenosine + L-methionine + A + H(+). The protein operates within cofactor biosynthesis; molybdopterin biosynthesis. Functionally, catalyzes the cyclization of GTP to (8S)-3',8-cyclo-7,8-dihydroguanosine 5'-triphosphate. This Pseudomonas putida (strain GB-1) protein is GTP 3',8-cyclase.